Consider the following 93-residue polypeptide: N-acetyl-S-hydroxy-L-cysteine reductase (93 aa).

Residues 1-93 form the Glutaredoxin domain; sequence MSDVVNIVVW…NHAQIKEAKR (93 aa). Cys15 and Cys18 are disulfide-bonded.

The protein belongs to the glutaredoxin family.

The enzyme catalyses N-acetyl-S-hydroxy-L-cysteine + AH2 = N-acetyl-L-cysteine + A + H2O. Its pathway is amino-acid metabolism. In terms of biological role, involved in a cysteine salvage pathway from S-alkylcysteine. Catalyzes the reduction of N-acetyl-S-hydroxy-L-cysteine (N-acetyl-L-cysteine sulfenic acid) to N-acetyl-L-cysteine. This pathway is likely important in the catabolism of alkylated cysteine generated by proteolysis of alkylated glutathione formed in the detoxification of a wide range of electrophiles. In Bacillus subtilis (strain 168), this protein is N-acetyl-S-hydroxy-L-cysteine reductase.